The sequence spans 409 residues: uncharacterized protein (409 aa).

Helical transmembrane passes span Ala-18–Val-38, Gly-47–Gly-67, Val-100–Ile-120, Val-159–Tyr-179, Ala-180–Leu-200, Phe-232–Leu-252, Gly-260–Leu-280, Ile-302–Gly-322, Gly-355–Leu-375, and Ile-380–Ala-400.

The protein localises to the cell membrane. This is an uncharacterized protein from Mycobacterium tuberculosis (strain CDC 1551 / Oshkosh).